The primary structure comprises 154 residues: MAVFQIVQYPDPILREKAREVRKITPQIERLAVNLVDTMRRSGGVGLAAPQIGVSKRVIVVEDPEKNPIVLINPEIVRLEGDKETAEEGCLSVPGVWGQVERRMCLTVRGYNLEGKQVAYLVEGFTARAFQHEIDHLDGIVFLDRATTIYKRKE.

Residues C90 and H132 each contribute to the Fe cation site. Residue E133 is part of the active site. H136 contributes to the Fe cation binding site.

It belongs to the polypeptide deformylase family. It depends on Fe(2+) as a cofactor.

It catalyses the reaction N-terminal N-formyl-L-methionyl-[peptide] + H2O = N-terminal L-methionyl-[peptide] + formate. In terms of biological role, removes the formyl group from the N-terminal Met of newly synthesized proteins. Requires at least a dipeptide for an efficient rate of reaction. N-terminal L-methionine is a prerequisite for activity but the enzyme has broad specificity at other positions. The protein is Peptide deformylase of Desulforudis audaxviator (strain MP104C).